Here is a 164-residue protein sequence, read N- to C-terminus: Leucine-rich single-pass membrane protein 2 (164 aa).

Residues 97-117 (GFLLLLALLVLTCLVLALLAV) form a helical membrane-spanning segment.

It localises to the membrane. The protein is Leucine-rich single-pass membrane protein 2 (LSMEM2) of Homo sapiens (Human).